Here is a 442-residue protein sequence, read N- to C-terminus: Glutamate--methylamine ligase (442 aa).

The GS beta-grasp domain occupies 13 to 97 (NQVKYILAQF…IACDGHTHGK (85 aa)). Positions 103–442 (TRVVLKKQLE…WEVNSYLEFF (340 aa)) constitute a GS catalytic domain.

It belongs to the glutamine synthetase family. Type 3 subfamily. It depends on Mg(2+) as a cofactor.

The enzyme catalyses methylamine + L-glutamate + ATP = N(5)-methyl-L-glutamine + ADP + phosphate + H(+). In terms of biological role, catalyzes the formation of N(5)-methyl-L-glutamine from glutamate and methylamine. In Methyloversatilis universalis (strain ATCC BAA-1314 / DSM 25237 / JCM 13912 / CCUG 52030 / FAM5), this protein is Glutamate--methylamine ligase.